The primary structure comprises 503 residues: Methylthioalkylmalate synthase 3, chloroplastic (503 aa).

A chloroplast-targeting transit peptide spans 1 to 51 (MASLLLTSSSMITTSCRSMVLRSGLPIGSSFPSLRLTRPYDKATLFVSCCS). Positions 85–359 (VRVLDTTLRD…YTKIDSRQIM (275 aa)) constitute a Pyruvate carboxyltransferase domain.

This sequence belongs to the alpha-IPM synthase/homocitrate synthase family. Mn(2+) is required as a cofactor. As to expression, highly expressed in roots, leaves, and siliques. Lower amounts in stems and flowers.

The protein localises to the plastid. It localises to the chloroplast. It catalyses the reaction an omega-(methylsulfanyl)-2-oxoalkanoate + acetyl-CoA + H2O = a 2-(omega-methylsulfanyl)alkylmalate + CoA + H(+). With respect to regulation, not activated by ATP. Determines the side chain length of aliphatic glucosinolate structures. Accepts all the omega-methylthio-2-oxoalkanoic acids needed to form the known C3 to C8 glucosinolates. Also able to convert pyruvate to citramalate, 2-oxoisovalerate to isopropylmalate, 4-methyl-2-oxopentanoate and 5-methyl-2-oxohexanoate for Leu-derived glucosinolates, 3-methyl-2-oxopentanoate for Ile-derived glucosinolates and phenylpyruvate to phenylethylglucosinolate. The polypeptide is Methylthioalkylmalate synthase 3, chloroplastic (MAM3) (Arabidopsis thaliana (Mouse-ear cress)).